The primary structure comprises 257 residues: MSVPLILTILAGAATFIGAFLGVLGQKPSNRLLAFSLGFAAGIMLLISLMEMLPAALAAEGMSPVLGYGMFIFGLLGYFGLDRMLPHAHPQDLMQKSVQPLPKSIKRTAILLTLGISLHNFPEGIATFVTASSNLELGFGIALAVALHNIPEGLAVAGPVYAATGSKRTAILWAGISGLAEILGGVLAWLILGSMISPVVMAAIMAAVAGIMVALSVDELMPLAKEIDPNNNPSYGVLCGMSVMGFSLVLLQTVGIG.

Transmembrane regions (helical) follow at residues 5–25 (LILT…GVLG), 32–52 (LLAF…LMEM), and 61–81 (GMSP…YFGL). Fe(2+) contacts are provided by N120 and E123. Residues E123 and H148 each coordinate Zn(2+). Transmembrane regions (helical) follow at residues 137-157 (LGFG…LAVA), 171-191 (ILWA…AWLI), 195-215 (MISP…MVAL), and 236-256 (GVLC…TVGI). Residues N149, E152, and E181 each contribute to the Fe(2+) site. E152 is a binding site for Zn(2+).

It belongs to the ZIP transporter (TC 2.A.5) family. ZupT subfamily.

It localises to the cell inner membrane. It catalyses the reaction Zn(2+)(in) = Zn(2+)(out). Mediates zinc uptake. May also transport other divalent cations. The polypeptide is Zinc transporter ZupT (Escherichia coli O81 (strain ED1a)).